Consider the following 911-residue polypeptide: Protein dead ringer (911 aa).

Disordered stretches follow at residues 1 to 44, 67 to 87, and 172 to 274; these read MQLR…DCDS, SGGG…LSHH, and HVTS…QNNG. Over residues 19-34 the composition is skewed to basic and acidic residues; the sequence is IERDSDLGDDLSHGDR. S30 carries the post-translational modification Phosphoserine. A Phosphothreonine modification is found at T35. The residue at position 44 (S44) is a Phosphoserine. Positions 174-201 are enriched in low complexity; it reads TSSPSGGNGSSYNGGTTPTNSSNSNATT. Residues 202-231 are compositionally biased toward gly residues; sequence NGGGTAGPGGTGGSGGGGGGGGGGGGGVGG. Positions 252–273 are enriched in low complexity; sequence AANSASNSSTSSEASNSSQQNN. Residues 293–385 enclose the ARID domain; sequence DPKRKEFLDD…YLYPYECEKK (93 aa). Disordered regions lie at residues 501–633, 662–775, and 826–877; these read GMPP…VGSG, PSMG…GKLN, and QSET…DQDM. A compositionally biased stretch (low complexity) spans 512–550; it reads HQQQHSQQQQQQQHHHQQQQQQQSQQQHHLQQQRQRSQS. Polar residues predominate over residues 570–600; it reads HNNNSPPGSAHTSPQQREALNLSDSPPNLTN. S592 and S594 each carry phosphoserine. Basic and acidic residues predominate over residues 601–621; the sequence is IKREREREPTPEPVDQDDKFV. Position 720 is a phosphoserine (S720). Residues 731–825 enclose the REKLES domain; it reads TTGGSVGHRH…GVLVANVPLS (95 aa). The span at 737–751 shows a compositional bias: basic residues; sequence GHRHSSPVSTKKKGG. Residues 841-853 are compositionally biased toward acidic residues; the sequence is TVEEEKDEEEEEE. Over residues 854-870 the composition is skewed to basic and acidic residues; that stretch reads PKAAEEESHRSPVKQEN.

Present in the pharyngeal muscles, hindgut epithelium, amnioserosa, ring gland, midgut-hindgut junction, posterior region of each brain lobe, longitudinal glial cells of the CNS and the salivary gland duct of germ-band retracted embryos.

The protein resides in the nucleus. Transcription factor which is a downstream target of gcm and repo. Directly or indirectly activates the transcription of locos and pros, which are essential for the development of some glial cells. Plays an essential role in defining the cell shape and migration characteristics of longitudinal glia that enable them to establish a normal axon scaffold. The polypeptide is Protein dead ringer (retn) (Drosophila melanogaster (Fruit fly)).